A 159-amino-acid polypeptide reads, in one-letter code: Phosphopantetheine adenylyltransferase (159 aa).

Residue Thr8 coordinates substrate. Residues 8 to 9 (TF) and His16 contribute to the ATP site. The substrate site is built by Lys40, Thr72, and Arg86. Residues 87-89 (GLR), Glu97, and 122-128 (YSFLSSS) contribute to the ATP site.

This sequence belongs to the bacterial CoaD family. As to quaternary structure, homohexamer. Mg(2+) serves as cofactor.

It is found in the cytoplasm. The catalysed reaction is (R)-4'-phosphopantetheine + ATP + H(+) = 3'-dephospho-CoA + diphosphate. The protein operates within cofactor biosynthesis; coenzyme A biosynthesis; CoA from (R)-pantothenate: step 4/5. Its function is as follows. Reversibly transfers an adenylyl group from ATP to 4'-phosphopantetheine, yielding dephospho-CoA (dPCoA) and pyrophosphate. In Prochlorococcus marinus subsp. pastoris (strain CCMP1986 / NIES-2087 / MED4), this protein is Phosphopantetheine adenylyltransferase.